The following is a 277-amino-acid chain: PHD finger protein ALFIN-LIKE 9 (277 aa).

Disordered stretches follow at residues 138-206 (KSKA…EEEH) and 255-277 (PSCSGGNGGGGGGSGNGKRARPS). The span at 145–160 (SANNHSNSKSKSSNKT) shows a compositional bias: low complexity. A PHD-type zinc finger spans residues 208 to 260 (ETLCGACGESYGADEFWICCDICEKWFHGKCVKITPAKAEHIKQYKCPSCSGG). Positions 259 to 270 (GGNGGGGGGSGN) are enriched in gly residues.

Belongs to the Alfin family. Interacts with H3K4me3 and to a lesser extent with H3K4me2.

The protein localises to the nucleus. Functionally, histone-binding component that specifically recognizes H3 tails trimethylated on 'Lys-4' (H3K4me3), which mark transcription start sites of virtually all active genes. In Oryza sativa subsp. indica (Rice), this protein is PHD finger protein ALFIN-LIKE 9.